The chain runs to 95 residues: Aspartyl/glutamyl-tRNA(Asn/Gln) amidotransferase subunit C (95 aa).

It belongs to the GatC family. As to quaternary structure, heterotrimer of A, B and C subunits.

The enzyme catalyses L-glutamyl-tRNA(Gln) + L-glutamine + ATP + H2O = L-glutaminyl-tRNA(Gln) + L-glutamate + ADP + phosphate + H(+). It catalyses the reaction L-aspartyl-tRNA(Asn) + L-glutamine + ATP + H2O = L-asparaginyl-tRNA(Asn) + L-glutamate + ADP + phosphate + 2 H(+). Its function is as follows. Allows the formation of correctly charged Asn-tRNA(Asn) or Gln-tRNA(Gln) through the transamidation of misacylated Asp-tRNA(Asn) or Glu-tRNA(Gln) in organisms which lack either or both of asparaginyl-tRNA or glutaminyl-tRNA synthetases. The reaction takes place in the presence of glutamine and ATP through an activated phospho-Asp-tRNA(Asn) or phospho-Glu-tRNA(Gln). The sequence is that of Aspartyl/glutamyl-tRNA(Asn/Gln) amidotransferase subunit C from Campylobacter concisus (strain 13826).